A 258-amino-acid polypeptide reads, in one-letter code: 5'-nucleotidase SurE (258 aa).

A divalent metal cation is bound by residues Asp14, Asp15, Ser45, and Asn101.

The protein belongs to the SurE nucleotidase family. It depends on a divalent metal cation as a cofactor.

The protein resides in the cytoplasm. It carries out the reaction a ribonucleoside 5'-phosphate + H2O = a ribonucleoside + phosphate. Its function is as follows. Nucleotidase that shows phosphatase activity on nucleoside 5'-monophosphates. This Chlorobium phaeobacteroides (strain DSM 266 / SMG 266 / 2430) protein is 5'-nucleotidase SurE.